A 195-amino-acid polypeptide reads, in one-letter code: Acireductone dioxygenase 2 (195 aa).

Fe(2+)-binding residues include histidine 94, histidine 96, glutamate 100, and histidine 139. 4 residues coordinate Ni(2+): histidine 94, histidine 96, glutamate 100, and histidine 139.

The protein belongs to the acireductone dioxygenase (ARD) family. Fe(2+) is required as a cofactor. The cofactor is Ni(2+).

Its subcellular location is the cytoplasm. The protein localises to the nucleus. The catalysed reaction is 1,2-dihydroxy-5-(methylsulfanyl)pent-1-en-3-one + O2 = 4-methylsulfanyl-2-oxobutanoate + formate + 2 H(+). It catalyses the reaction 1,2-dihydroxy-5-(methylsulfanyl)pent-1-en-3-one + O2 = 3-(methylsulfanyl)propanoate + CO + formate + 2 H(+). The protein operates within amino-acid biosynthesis; L-methionine biosynthesis via salvage pathway; L-methionine from S-methyl-5-thio-alpha-D-ribose 1-phosphate: step 5/6. In terms of biological role, catalyzes 2 different reactions between oxygen and the acireductone 1,2-dihydroxy-3-keto-5-methylthiopentene (DHK-MTPene) depending upon the metal bound in the active site. Fe-containing acireductone dioxygenase (Fe-ARD) produces formate and 2-keto-4-methylthiobutyrate (KMTB), the alpha-ketoacid precursor of methionine in the methionine recycle pathway. Ni-containing acireductone dioxygenase (Ni-ARD) produces methylthiopropionate, carbon monoxide and formate, and does not lie on the methionine recycle pathway. The chain is Acireductone dioxygenase 2 from Physcomitrium patens (Spreading-leaved earth moss).